A 938-amino-acid polypeptide reads, in one-letter code: MIDYKNTLNLPKTQFAMRGNLAIREPIMLKRWHQQDLYQLICQATQGKKTFFLHDGPPYANGSIHIGHSVNKILKDIIIKSKRLMGYCSPYIPGWDCHGLPIELKVEQLIGKPGKKVSASEFIIACRNYASEQVTWQKKDFIRLGVLGDWDNIYRTMDFHTEANIIRTLSKIIENGHVYQGNKPVHWCIDCRSALAEAEVEYYDYTSPSIYVIFAATNTHDVAARFGIPNVLSSISFLVWTTTPWTIPANRAISIHPNLNYQLVKVNQQGFILAADLVTSVLTYLGIQNWTVVKNIKGYVLELLRFSHPFMKFDVPVVLSNHVTINVGTGVVHTSPSHGPDDYLIGREYNLEIVNIVGPDGCYLPGTFSLLDGTSVYQSNQTVISLLKDRGALLHTGTIQHSYPHCWRHKTPLIFRATPQWFISMDKKKLRQQSLKEIKKIQWIPSNSQASITNMVNNRQDWCISRQRIWGVPMSLFVHNHTKKLHPQTSEIMEYVAKQVEKKGIQAWWDLDPIKILGDDIVNYSKINDILDVWFDSGSTHSSVINAQTEFANHEIDMYLEGADQHRGWFMSSLISSTAIKGKAPYKTVITHGFAVDSNGRKMSKSIGNVVSPQQVVDKLGADILRLWVASTNYTDDMTISDEILKRSVDTYRRIRNTARFLLANLNGFEPKQHSVSIDKMIILDQWAIDRAQVAQDEIIAAYNSYEFHSVVQRIMQFCSVEMGSFYLDIIKDRQYTTQYNSIARRSCQTALFHIIEAMVRWIAPIISFTADEIWGFIPGKRSPSVFIEEWYKNLSRLDAEQHMNDTYWNTLLQVRSDVNYLIEQARIKKNIGSSLETQVTLYSEPILAMQLRQLGNELHFVLLTSAVQIADYQEADNNALQSTRIKGLKITLNHATGRKCQRCWHYEQDIGNNTQYPEICGRCVINIAGNGEERKFV.

The short motif at 58-68 (PYANGSIHIGH) is the 'HIGH' region element. Residue Glu561 participates in L-isoleucyl-5'-AMP binding. The 'KMSKS' region motif lies at 602 to 606 (KMSKS). Lys605 provides a ligand contact to ATP. The Zn(2+) site is built by Cys901, Cys904, Cys921, and Cys924.

Belongs to the class-I aminoacyl-tRNA synthetase family. IleS type 1 subfamily. Monomer. Requires Zn(2+) as cofactor.

It is found in the cytoplasm. It catalyses the reaction tRNA(Ile) + L-isoleucine + ATP = L-isoleucyl-tRNA(Ile) + AMP + diphosphate. Functionally, catalyzes the attachment of isoleucine to tRNA(Ile). As IleRS can inadvertently accommodate and process structurally similar amino acids such as valine, to avoid such errors it has two additional distinct tRNA(Ile)-dependent editing activities. One activity is designated as 'pretransfer' editing and involves the hydrolysis of activated Val-AMP. The other activity is designated 'posttransfer' editing and involves deacylation of mischarged Val-tRNA(Ile). In Baumannia cicadellinicola subsp. Homalodisca coagulata, this protein is Isoleucine--tRNA ligase.